Consider the following 393-residue polypeptide: NAD(P)H-quinone oxidoreductase subunit H, chloroplastic (393 aa).

It belongs to the complex I 49 kDa subunit family. In terms of assembly, NDH is composed of at least 16 different subunits, 5 of which are encoded in the nucleus.

It is found in the plastid. The protein resides in the chloroplast thylakoid membrane. It carries out the reaction a plastoquinone + NADH + (n+1) H(+)(in) = a plastoquinol + NAD(+) + n H(+)(out). It catalyses the reaction a plastoquinone + NADPH + (n+1) H(+)(in) = a plastoquinol + NADP(+) + n H(+)(out). In terms of biological role, NDH shuttles electrons from NAD(P)H:plastoquinone, via FMN and iron-sulfur (Fe-S) centers, to quinones in the photosynthetic chain and possibly in a chloroplast respiratory chain. The immediate electron acceptor for the enzyme in this species is believed to be plastoquinone. Couples the redox reaction to proton translocation, and thus conserves the redox energy in a proton gradient. The sequence is that of NAD(P)H-quinone oxidoreductase subunit H, chloroplastic from Arabis hirsuta (Hairy rock-cress).